Reading from the N-terminus, the 419-residue chain is Gamma-glutamyl phosphate reductase (419 aa).

It belongs to the gamma-glutamyl phosphate reductase family.

It localises to the cytoplasm. The enzyme catalyses L-glutamate 5-semialdehyde + phosphate + NADP(+) = L-glutamyl 5-phosphate + NADPH + H(+). The protein operates within amino-acid biosynthesis; L-proline biosynthesis; L-glutamate 5-semialdehyde from L-glutamate: step 2/2. In terms of biological role, catalyzes the NADPH-dependent reduction of L-glutamate 5-phosphate into L-glutamate 5-semialdehyde and phosphate. The product spontaneously undergoes cyclization to form 1-pyrroline-5-carboxylate. This chain is Gamma-glutamyl phosphate reductase, found in Caulobacter sp. (strain K31).